Here is a 440-residue protein sequence, read N- to C-terminus: tRNA(Ile)-lysidine synthase (440 aa).

Residue 29–34 (SGGLDS) participates in ATP binding.

The protein belongs to the tRNA(Ile)-lysidine synthase family.

The protein localises to the cytoplasm. It catalyses the reaction cytidine(34) in tRNA(Ile2) + L-lysine + ATP = lysidine(34) in tRNA(Ile2) + AMP + diphosphate + H(+). Its function is as follows. Ligates lysine onto the cytidine present at position 34 of the AUA codon-specific tRNA(Ile) that contains the anticodon CAU, in an ATP-dependent manner. Cytidine is converted to lysidine, thus changing the amino acid specificity of the tRNA from methionine to isoleucine. The polypeptide is tRNA(Ile)-lysidine synthase (Pectobacterium atrosepticum (strain SCRI 1043 / ATCC BAA-672) (Erwinia carotovora subsp. atroseptica)).